A 313-amino-acid polypeptide reads, in one-letter code: Potassium channel subfamily K member 6 (313 aa).

Residues 1–4 (MRRG) are Cytoplasmic-facing. The helical transmembrane segment at 5–25 (ALLASALAAYAGYLALGALLV) threads the bilayer. N-linked (GlcNAc...) asparagine glycosylation is found at Asn79 and Asn85. An intramembrane region (pore-forming) is located at residues 90–115 (AWDFASALFFASTLVTTVGYGYTTPL). 4 residues coordinate K(+): Thr106, Val107, Gly108, and Tyr109. Residues 106 to 111 (TVGYGY) are selectivity filter 1. Residues 121–141 (AFSIVFALLGVPITMLLLTAS) traverse the membrane as a helical segment. Residues 142-172 (AQRLSLLLTHAPLSWLSLHWGWPPQRAARWH) are Cytoplasmic-facing. The helical transmembrane segment at 173 to 193 (LVALLMVIVAIFFLVPAAVFA) threads the bilayer. The segment at residues 199–223 (WSFLDAFYFCFISLSTIGLGDYVPG) is an intramembrane region (pore-forming). 3 residues coordinate K(+): Thr214, Ile215, and Gly216. A selectivity filter 2 region spans residues 214-219 (TIGLGD). Residues 236 to 256 (VLVTAYLFLGLVAMVLVLQTF) traverse the membrane as a helical segment. The Cytoplasmic portion of the chain corresponds to 257–313 (RRVSDLHGLTELILLPDPDPASLSQDEDDQVAVLDARTDLHQHLSAASHADYASIPR). Short sequence motifs (lysosomal targeting signal) lie at residues 282-290 (DEDDQVAVL) and 308-312 (YASIP).

It belongs to the two pore domain potassium channel (TC 1.A.1.8) family. In terms of assembly, homodimer; disulfide-linked. In terms of processing, N-glycosylation is necessary for targeting to lysosomes.

The protein localises to the late endosome membrane. The protein resides in the lysosome membrane. It catalyses the reaction K(+)(in) = K(+)(out). In terms of biological role, k(+) channel that conducts outward rectifying currents at the membranes of the endolysosomal system. Active in lysosomes where it regulates lysosome numbers and size. In macrophages, enables K(+) efflux coupled to ATP-induced NLRP3 inflammasome activation upon bacterial infection. Cooperates with ATP-gated P2RX7 to activate NLRP3 inflammasome, with P2RX7 conducting Ca(2+) and Na(+) influx that sets the membrane potential for K(+) efflux. The chain is Potassium channel subfamily K member 6 from Mus musculus (Mouse).